A 753-amino-acid polypeptide reads, in one-letter code: Polyribonucleotide nucleotidyltransferase (753 aa).

Residues D488 and D494 each contribute to the Mg(2+) site. In terms of domain architecture, KH spans 555 to 614 (PKLYTMKINPEKIRDVIGKGGSTIRALTEETGTQIDIGEDGTITIASSDAAKADEAKRRI). The 69-residue stretch at 624–692 (GKIYEGPVTK…EKGRVKLSLK (69 aa)) folds into the S1 motif domain. The tract at residues 692-753 (KALTERPAGM…EGEQQQQQQQ (62 aa)) is disordered. Over residues 699–739 (AGMERSDRPAPAEREFRQPREPRQQREFREPREPREPRDGG) the composition is skewed to basic and acidic residues.

The protein belongs to the polyribonucleotide nucleotidyltransferase family. The cofactor is Mg(2+).

The protein resides in the cytoplasm. The catalysed reaction is RNA(n+1) + phosphate = RNA(n) + a ribonucleoside 5'-diphosphate. In terms of biological role, involved in mRNA degradation. Catalyzes the phosphorolysis of single-stranded polyribonucleotides processively in the 3'- to 5'-direction. The chain is Polyribonucleotide nucleotidyltransferase from Delftia acidovorans (strain DSM 14801 / SPH-1).